We begin with the raw amino-acid sequence, 345 residues long: Holliday junction branch migration complex subunit RuvB (345 aa).

A large ATPase domain (RuvB-L) region spans residues 1–182 (MQRLVEVESV…FGMHFRMQFY (182 aa)). ATP contacts are provided by residues leucine 21, arginine 22, glycine 63, lysine 66, threonine 67, threonine 68, 129–131 (EDY), arginine 172, tyrosine 182, and arginine 219. Mg(2+) is bound at residue threonine 67. The small ATPAse domain (RuvB-S) stretch occupies residues 183–253 (TEIELAKIIQ…RCKYALDELG (71 aa)). The interval 256-345 (ESGFDEMDIN…EDDLTQGKLF (90 aa)) is head domain (RuvB-H). DNA-binding residues include arginine 310 and arginine 315.

This sequence belongs to the RuvB family. In terms of assembly, homohexamer. Forms an RuvA(8)-RuvB(12)-Holliday junction (HJ) complex. HJ DNA is sandwiched between 2 RuvA tetramers; dsDNA enters through RuvA and exits via RuvB. An RuvB hexamer assembles on each DNA strand where it exits the tetramer. Each RuvB hexamer is contacted by two RuvA subunits (via domain III) on 2 adjacent RuvB subunits; this complex drives branch migration. In the full resolvosome a probable DNA-RuvA(4)-RuvB(12)-RuvC(2) complex forms which resolves the HJ.

The protein localises to the cytoplasm. It catalyses the reaction ATP + H2O = ADP + phosphate + H(+). Functionally, the RuvA-RuvB-RuvC complex processes Holliday junction (HJ) DNA during genetic recombination and DNA repair, while the RuvA-RuvB complex plays an important role in the rescue of blocked DNA replication forks via replication fork reversal (RFR). RuvA specifically binds to HJ cruciform DNA, conferring on it an open structure. The RuvB hexamer acts as an ATP-dependent pump, pulling dsDNA into and through the RuvAB complex. RuvB forms 2 homohexamers on either side of HJ DNA bound by 1 or 2 RuvA tetramers; 4 subunits per hexamer contact DNA at a time. Coordinated motions by a converter formed by DNA-disengaged RuvB subunits stimulates ATP hydrolysis and nucleotide exchange. Immobilization of the converter enables RuvB to convert the ATP-contained energy into a lever motion, pulling 2 nucleotides of DNA out of the RuvA tetramer per ATP hydrolyzed, thus driving DNA branch migration. The RuvB motors rotate together with the DNA substrate, which together with the progressing nucleotide cycle form the mechanistic basis for DNA recombination by continuous HJ branch migration. Branch migration allows RuvC to scan DNA until it finds its consensus sequence, where it cleaves and resolves cruciform DNA. The polypeptide is Holliday junction branch migration complex subunit RuvB (Aliarcobacter butzleri (strain RM4018) (Arcobacter butzleri)).